A 185-amino-acid polypeptide reads, in one-letter code: HTH-type transcriptional regulator Hpr (185 aa).

The HTH marR-type domain maps to 13–157 (AMIFSQRIAQ…LIAILRNIYG (145 aa)). Residues 63–86 (ISEIAKFGVMHVSTAFNFSKKLEE) constitute a DNA-binding region (H-T-H motif).

In terms of assembly, homodimer.

Its function is as follows. Negative regulator of protease production and sporulation. The protein is HTH-type transcriptional regulator Hpr of Bacillus cereus (strain G9842).